The chain runs to 345 residues: Krueppel-like factor 3 (345 aa).

The interval 1 to 74 is repressor domain; the sequence is MLMFDPVPVK…TVNKRSSPPS (74 aa). Lysine 10 is covalently cross-linked (Glycyl lysine isopeptide (Lys-Gly) (interchain with G-Cter in SUMO)). The 9aaTAD; inactive signature appears at 60–68; sequence EPVDLTVNK. Residues 61 to 65 carry the CTBP-binding motif motif; that stretch reads PVDLT. Residues 66–112 form a disordered region; it reads VNKRSSPPSAGNSPSSLKFPSSHRRASPGLSMPSSSPPIKKYSPPSP. Lysine 68 participates in a covalent cross-link: Glycyl lysine isopeptide (Lys-Gly) (interchain with G-Cter in SUMO2). Low complexity-rich tracts occupy residues 70–81 and 92–108; these read SSPPSAGNSPSS and SPGL…KKYS. Serine 71, serine 92, serine 101, serine 108, and serine 111 each carry phosphoserine. Glycyl lysine isopeptide (Lys-Gly) (interchain with G-Cter in SUMO2) cross-links involve residues lysine 196 and lysine 198. Residues serine 216, serine 224, and serine 250 each carry the phosphoserine modification. 3 C2H2-type zinc fingers span residues 260 to 284, 290 to 314, and 320 to 342; these read HRCD…RRTH, YKCT…FRKH, and FQCP…RKRH.

It belongs to the krueppel C2H2-type zinc-finger protein family. As to quaternary structure, monomer. Post-translationally, sumoylated with SUMO1. Sumoylation is enhanced by PIAS1, PIAS2alpha and PIAS2beta, and PIAS4, but not by Pc2. Enhances transcriptional repression, but has no effect on DNA binding. Sumoylation on Lys-198 is the major site.

The protein resides in the nucleus. In terms of biological role, binds to the CACCC box of erythroid cell-expressed genes. May play a role in hematopoiesis. The sequence is that of Krueppel-like factor 3 (KLF3) from Homo sapiens (Human).